The primary structure comprises 375 residues: Coproporphyrin III ferrochelatase (375 aa).

Fe-coproporphyrin III-binding residues include Ser59 and Tyr128. Residues His191 and Glu286 each coordinate Fe(2+).

The protein belongs to the ferrochelatase family.

Its subcellular location is the cytoplasm. The catalysed reaction is Fe-coproporphyrin III + 2 H(+) = coproporphyrin III + Fe(2+). It functions in the pathway porphyrin-containing compound metabolism; protoheme biosynthesis. Involved in coproporphyrin-dependent heme b biosynthesis. Catalyzes the insertion of ferrous iron into coproporphyrin III to form Fe-coproporphyrin III. This is Coproporphyrin III ferrochelatase from Streptomyces griseus subsp. griseus (strain JCM 4626 / CBS 651.72 / NBRC 13350 / KCC S-0626 / ISP 5235).